The primary structure comprises 333 residues: cGAMP-activated phospholipase (333 aa).

In terms of domain architecture, PNPLA spans 10-191 (LALSGGGYRG…VGNAPGLFGL (182 aa)). Residues 14–19 (GGGYRG) carry the GXGXXG motif. The GXSXG signature appears at 46–50 (GTSAG). The active-site Nucleophile is S48. The active-site Proton acceptor is D178. The short motif at 178 to 180 (DGG) is the DGA/G element.

This sequence belongs to the patatin family.

The catalysed reaction is a 1,2-diacyl-sn-glycero-3-phosphocholine + H2O = a 2-acyl-sn-glycero-3-phosphocholine + a fatty acid + H(+). It catalyses the reaction 1,2-di-(9Z-octadecenoyl)-sn-glycero-3-phosphoethanolamine + 2 H2O = sn-glycero-3-phosphoethanolamine + 2 (9Z)-octadecenoate + 2 H(+). Its activity is regulated as follows. Phospholipase activity is specifically activated upon cGAMP binding, which is produced by the cognate cyclic nucleotide synthase encoded in the same operon. Is not activated by cyclic dinucleotides 2',3'-cGAMP, c-diAMP or 3',3'-c-diGMP. Effector phospholipase of a CBASS antiviral system. CBASS (cyclic oligonucleotide-based antiphage signaling system) provides immunity against bacteriophages. The CD-NTase protein (CdnA) synthesizes cyclic nucleotides in response to infection; these serve as specific second messenger signals. The signals activate a diverse range of effectors, leading to bacterial cell death and thus abortive phage infection. A type II-A(GA) CBASS system. In terms of biological role, phospholipase that is activated upon binding to the cyclic dinucleotide (CDN) second messenger 3',3'-cyclic GMP-AMP (cGAMP). Degrades phospholipids in the cell membrane. Functionally, the capV-cdnA-cap2-cap3 operon provides about 10(4)-fold protection in strain BWHPSA011 against infection by phage PaMx41. In P.aeruginosa strain PAO1 it confers protection against phages PaMx41 and JBD18 but not JBD67 (JBD18 and JBD67 do not replicate in BWHPSA011 / Pa011). When acb2 in JBD67 is deleted this CBASS operon then protects against JDB67 also. This CBASS system limits prophage induction of lysogenized JBD67 as well as viral lytic replication. The sequence is that of cGAMP-activated phospholipase from Pseudomonas aeruginosa (strain BWHPSA011 / Pa011).